Reading from the N-terminus, the 461-residue chain is MSLRIYNTLSRALEAFSPIEPGHVRMYVCGMTVYDLCHLGHARSMVAFDVVQRWLRASGHRVTYVRNITDIDDKIIRRAVENGETIRSLTDRMIDALHQDADALGIERPTHEPRATEYVPQMLSMIGRLQDKGLAYQGTDGDVNFAVRKFPGYGKLSGKSLDELQAGERVAVQDGKQDPLDFVLWKSAKPAEPEEVKWASPWGVGRPGWHIECSAMGCEMLGESFDIHGGGADLQFPHHENEIAQSEGATGKPFSQVWMHNGFINVDNEKMSKSLGNFFTIRDVLKEYDAETVRFFVVRSHYRSPLNYSDVHLNDARGALKRLYTALSLVAPAEVAVDWNHPAAARFKAAMDEDFGTPEAVAVLFELAAEVNRSKSAETAGLLKALAGCLGLLQGDPQAFLQAGTSEMDAGAIEAQIAARAAAKAAKDWAEADRIRKALLEQGIVLKDSPAGTTWEAAAKG.

Cys-29 contributes to the Zn(2+) binding site. The 'HIGH' region signature appears at 31–41; sequence MTVYDLCHLGH. Residues Cys-213, His-238, and Glu-242 each coordinate Zn(2+). The short motif at 270-274 is the 'KMSKS' region element; sequence KMSKS. Residue Lys-273 participates in ATP binding.

The protein belongs to the class-I aminoacyl-tRNA synthetase family. Monomer. Requires Zn(2+) as cofactor.

The protein resides in the cytoplasm. It catalyses the reaction tRNA(Cys) + L-cysteine + ATP = L-cysteinyl-tRNA(Cys) + AMP + diphosphate. This chain is Cysteine--tRNA ligase, found in Delftia acidovorans (strain DSM 14801 / SPH-1).